Here is a 360-residue protein sequence, read N- to C-terminus: Peptide chain release factor 1 (360 aa).

Gln235 carries the post-translational modification N5-methylglutamine. The segment at 281–310 is disordered; it reads AERQRQDAAQAESRRLQVGSGDRSQRIRTY.

Belongs to the prokaryotic/mitochondrial release factor family. Post-translationally, methylated by PrmC. Methylation increases the termination efficiency of RF1.

The protein localises to the cytoplasm. Functionally, peptide chain release factor 1 directs the termination of translation in response to the peptide chain termination codons UAG and UAA. The protein is Peptide chain release factor 1 of Stenotrophomonas maltophilia (strain K279a).